A 71-amino-acid chain; its full sequence is MPSVKIKENEPFDVALRRFKRACEKAGILADVRARECYEKPTTVRKREAAAAVKRHAKKVQRESKKFTRLY.

Belongs to the bacterial ribosomal protein bS21 family.

In Cellvibrio japonicus (strain Ueda107) (Pseudomonas fluorescens subsp. cellulosa), this protein is Small ribosomal subunit protein bS21.